We begin with the raw amino-acid sequence, 146 residues long: MAENTNEITTSEWEVMRIVWSLGQVNSRDLIDLLQPKRDWQDSTIKTLIGRLVKKGFLKTEKEGRRFNYTATVPEIEAMENATQSLFEHLCGMKKGQTLAALIDQTTLSQTDILQLQQLLTAKAATAPEKVACDCLPNKCDCEKEE.

Belongs to the BlaI transcriptional regulatory family.

This is an uncharacterized protein from Latilactobacillus sakei (Lactobacillus sakei).